Consider the following 554-residue polypeptide: 3-(3-hydroxy-phenyl)propionate/3-hydroxycinnamic acid hydroxylase (554 aa).

Residues 17–46 and 285–295 each bind FAD; these read QVAIAGAGPVGLMMANYLGQMGIDVLVVEK and FRIDRVLLAGD.

Belongs to the PheA/TfdB FAD monooxygenase family. The cofactor is FAD.

It carries out the reaction 3-(3-hydroxyphenyl)propanoate + NADH + O2 + H(+) = 3-(2,3-dihydroxyphenyl)propanoate + NAD(+) + H2O. The catalysed reaction is (2E)-3-(3-hydroxyphenyl)prop-2-enoate + NADH + O2 + H(+) = (2E)-3-(2,3-dihydroxyphenyl)prop-2-enoate + NAD(+) + H2O. It participates in aromatic compound metabolism; 3-phenylpropanoate degradation. Its function is as follows. Catalyzes the insertion of one atom of molecular oxygen into position 2 of the phenyl ring of 3-(3-hydroxyphenyl)propionate (3-HPP) and hydroxycinnamic acid (3HCI). In Escherichia coli (strain K12 / DH10B), this protein is 3-(3-hydroxy-phenyl)propionate/3-hydroxycinnamic acid hydroxylase.